A 287-amino-acid polypeptide reads, in one-letter code: Mitochondrial glycine transporter B (287 aa).

Solcar repeat units follow at residues 7–97 (HPAL…LKQH), 104–188 (PSAG…AKKA), and 198–282 (IAPL…LMAR). 6 helical membrane-spanning segments follow: residues 13-38 (FMCGSLSGTCSTLLFQPLDLVKTRLQ), 72-98 (GVSPSFMRCIPGVGIYFSTFYSLKQHY), 110-135 (VLLGAGARCVAGVAMLPFTVIKTRFE), 163-186 (GLTATLLRDAPFSGIYVMFYSQAK), 202-228 (VNFGCGVVAGILASLATQPADVIKTHM), and 257-275 (GAVPRSLRRTLMAAMAWTV).

It belongs to the mitochondrial carrier (TC 2.A.29) family. SLC25A38 subfamily. As to expression, at 24 hours post-fertilization, expressed predominantly in posterior blood island, posterior cardinal vein and circulating blood. At 34 hours post-fertilization, becomes restricted to posterior blood island and circulating blood.

Its subcellular location is the mitochondrion inner membrane. The catalysed reaction is glycine(in) = glycine(out). Its function is as follows. Mitochondrial glycine transporter that imports glycine into the mitochondrial matrix. Plays an important role in providing glycine for the first enzymatic step in heme biosynthesis, the condensation of glycine with succinyl-CoA to produce 5-aminolevulinate (ALA) in the mitochondrial matrix. Required during erythropoiesis. May play a role as pro-apoptotic protein that induces caspase-dependent apoptosis. The sequence is that of Mitochondrial glycine transporter B (slc25a38b) from Danio rerio (Zebrafish).